Consider the following 793-residue polypeptide: Translocase of chloroplast 90, chloroplastic (793 aa).

Residues 22–59 are disordered; it reads LGSDPFFRDPHQEQDNHSQAPAAPQPVTLSEPPCSTSS. The span at 27 to 37 shows a compositional bias: basic and acidic residues; it reads FFRDPHQEQDN. Residues 130-157 are a coiled coil; the sequence is LIRAEESELKNVKLRQDRAKALAREQES. In terms of domain architecture, AIG1-type G spans 164–394; it reads DFSLRILVLG…FRDSIGLGQP (231 aa). The tract at residues 173-180 is G1; it reads GKTGVGKS. GTP is bound by residues 176–181 and 195–200; these read GVGKSA and DAFRPG. Residue S180 participates in Mg(2+) binding. The homodimerization stretch occupies residues 195–198; the sequence is DAFR. A G2 region spans residues 199–203; sequence PGTDR. The interval 220-223 is G3; sequence DTPG. Positions 259–264 are homodimerization; that stretch reads RLDMID. The helical transmembrane segment at 279–297 threads the bilayer; it reads IFGAAIWLNTILVMTHSAA. The interval 293 to 296 is G4; sequence THSA. GTP is bound by residues H294 and 341–342; that span reads EN. The interval 341-343 is G5; the sequence is ENH. Coiled coils occupy residues 410-442 and 477-503; these read LRRR…YDQL and KKQL…DTEQ.

This sequence belongs to the TRAFAC class TrmE-Era-EngA-EngB-Septin-like GTPase superfamily. AIG1/Toc34/Toc159-like paraseptin GTPase family. TOC159 subfamily. As to quaternary structure, homodimer. Part of the TOC core complex that includes 1 protein for the specific recognition of transit peptides surrounded by a ring composed of four proteins forming translocation channels, and four to five GTP-binding proteins providing energy. This core complex can interact with components of the TIC complex to form a larger import complex. Chloroplastic protein precursor such as prSS (precursor of the RuBisCO small subunit) interacts with these complexes. The TOC complex contains a specific subset of polar lipids such as digalactosyldiacylglyceride (DGDG), phosphatidylcholine (PC) and phosphatidylglycerol (PG). Interacts with TOC33 and TOC75. It depends on Mg(2+) as a cofactor. In terms of tissue distribution, expressed in seedlings, leaves, flowers, and roots.

The protein resides in the plastid. The protein localises to the chloroplast outer membrane. It localises to the cytoplasm. GTPase involved in protein precursor import into chloroplasts. Seems to recognize chloroplast-destined precursor proteins and regulate their presentation to the translocation channel through GTP hydrolysis. Probably specialized in the import of nuclear encoded photosynthetic preproteins from the cytoplasm to the chloroplast. This chain is Translocase of chloroplast 90, chloroplastic (TOC90), found in Arabidopsis thaliana (Mouse-ear cress).